A 262-amino-acid polypeptide reads, in one-letter code: Malonyl-[acyl-carrier protein] O-methyltransferase (262 aa).

This sequence belongs to the methyltransferase superfamily.

The enzyme catalyses malonyl-[ACP] + S-adenosyl-L-methionine = malonyl-[ACP] methyl ester + S-adenosyl-L-homocysteine. The protein operates within cofactor biosynthesis; biotin biosynthesis. In terms of biological role, converts the free carboxyl group of a malonyl-thioester to its methyl ester by transfer of a methyl group from S-adenosyl-L-methionine (SAM). It allows to synthesize pimeloyl-ACP via the fatty acid synthetic pathway. This chain is Malonyl-[acyl-carrier protein] O-methyltransferase, found in Erwinia pyrifoliae (strain DSM 12163 / CIP 106111 / Ep16/96).